The sequence spans 687 residues: Phage-like element PBSX protein XkdV (687 aa).

It to B.subtilis YqcC.

This Bacillus subtilis (strain 168) protein is Phage-like element PBSX protein XkdV (xkdV).